The primary structure comprises 1042 residues: Sarcoplasmic/endoplasmic reticulum calcium ATPase 2 (1042 aa).

At 1–48 (MENAHTKTVEEVLGHFGVNESTGLSLEQVKKLKERWGSNELPAEEGKT) the chain is on the cytoplasmic side. Position 38 is a phosphoserine (S38). A helical membrane pass occupies residues 49 to 69 (LLELVIEQFEDLLVRILLLAA). At 70–89 (CISFVLAWFEEGEETITAFV) the chain is on the lumenal side. A helical transmembrane segment spans residues 90-110 (EPFVILLILVANAIVGVWQER). At 111 to 253 (NAENAIEALK…QERTPLQQKL (143 aa)) the chain is on the cytoplasmic side. Residues 254–273 (DEFGEQLSKVISLICIAVWI) traverse the membrane as a helical segment. Topologically, residues 274–295 (INIGHFNDPVHGGSWIRGAIYY) are lumenal. A 3'-nitrotyrosine mark is found at Y294 and Y295. The helical transmembrane segment at 296-313 (FKIAVALAVAAIPEGLPA) threads the bilayer. Ca(2+) is bound by residues V304, A305, I307, and E309. Topologically, residues 314–756 (VITTCLALGT…EEGRAIYNNM (443 aa)) are cytoplasmic. D351 (4-aspartylphosphate intermediate) is an active-site residue. Mg(2+) contacts are provided by D351 and T353. T353 provides a ligand contact to ATP. T441 is modified (phosphothreonine). ATP-binding residues include E442, R489, and K514. Position 531 is a phosphoserine (S531). Residue R559 coordinates ATP. Residues 575 to 594 (MHLKDSANFIKYETNLTFVG) are interaction with HAX1. At S580 the chain carries Phosphoserine. ATP-binding residues include T624, G625, and D626. S663 carries the phosphoserine modification. ATP is bound by residues R677 and K683. Residue D702 coordinates Mg(2+). N705 provides a ligand contact to ATP. Residues 757-776 (KQFIRYLISSNVGEVVCIFL) traverse the membrane as a helical segment. Positions 767 and 770 each coordinate Ca(2+). At 777–786 (TAALGFPEAL) the chain is on the lumenal side. Residues 787 to 807 (IPVQLLWVNLVTDGLPATALG) form a helical membrane-spanning segment. Residues 787 to 807 (IPVQLLWVNLVTDGLPATALG) form an interaction with PLN region. The tract at residues 788–1042 (PVQLLWVNLV…DTNFSDLLWS (255 aa)) is interaction with TMEM64 and PDIA3. 3 residues coordinate Ca(2+): N795, T798, and D799. Topologically, residues 808–827 (FNPPDLDIMNKPPRNPKEPL) are cytoplasmic. Residues 828-850 (ISGWLFFRYLAIGCYVGAATVGA) traverse the membrane as a helical segment. At 851 to 896 (AAWWFIAADGGPRVSFYQLSHFLQCKEDNPDFEGVDCAIFESPYPM) the chain is on the lumenal side. A disulfide bond links C875 and C887. A helical membrane pass occupies residues 897 to 916 (TMALSVLVTIEMCNALNSLS). Position 907 (E907) interacts with Ca(2+). The Cytoplasmic segment spans residues 917-929 (ENQSLLRMPPWEN). The helical transmembrane segment at 930 to 948 (IWLVGSICLSMSLHFLILY) threads the bilayer. The tract at residues 931–942 (WLVGSICLSMSL) is interaction with PLN. Residues 949 to 963 (VEPLPLIFQITPLNV) lie on the Lumenal side of the membrane. The helical transmembrane segment at 964-984 (TQWLMVLKISLPVILMDETLK) threads the bilayer. Over 985 to 1042 (FVARNYLEPGKECVQPAPQSCSLWACTEGVSWPFVLLIVPLVMWVYSTDTNFSDLLWS) the chain is Cytoplasmic.

The protein belongs to the cation transport ATPase (P-type) (TC 3.A.3) family. Type IIA subfamily. Interacts with sarcolipin (SLN); the interaction inhibits ATP2A2 Ca(2+) affinity. Interacts with phospholamban (PLN); the interaction inhibits ATP2A2 Ca(2+) affinity. Interacts with myoregulin (MRLN). Interacts with ARLN and ERLN; the interactions inhibit ATP2A2 Ca(2+) affinity. Interacts with SRTIT1/DWORF; the interaction results in activation of ATP2A2. Interacts with the monomeric forms of SLN, PLN, ARLN, ERLN and STRI1/DWORF. Interacts with HAX1. Interacts with S100A8 and S100A9. Interacts with SLC35G1 and STIM1. Interacts with TMEM203. Interacts with TMEM64 and PDIA3. Interacts with TMX1. Interacts with TMX2. Interacts with VMP1; VMP1 competes with PLN and SLN to prevent them from forming an inhibitory complex with ATP2A2. Interacts with ULK1. Interacts with TUNAR. Interacts with FLVCR2; this interaction occurs in the absence of heme and promotes ATP2A2 proteasomal degradation; this complex is dissociated upon heme binding. Interacts with FNIP1. In terms of assembly, interacts with TRAM2 (via C-terminus). The cofactor is Mg(2+). In terms of processing, nitrated under oxidative stress. Nitration on the two tyrosine residues inhibits catalytic activity. Post-translationally, serotonylated on Gln residues by TGM2 in response to hypoxia, leading to its inactivation. Isoform 2 is highly expressed in heart and slow twitch skeletal muscle. Isoform 1 is widely expressed.

It is found in the endoplasmic reticulum membrane. Its subcellular location is the sarcoplasmic reticulum membrane. It catalyses the reaction Ca(2+)(in) + ATP + H2O = Ca(2+)(out) + ADP + phosphate + H(+). With respect to regulation, has different conformational states with differential Ca2+ affinity. The E1 conformational state (active form) shows high Ca(2+) affinity, while the E2 state exhibits low Ca(2+) affinity. Binding of ATP allosterically increases its affinity for subsequent binding of Ca2+. Reversibly inhibited by phospholamban (PLN) at low calcium concentrations. PLN inhibits ATP2A2 Ca(2+) affinity by disrupting its allosteric activation by ATP. Inhibited by sarcolipin (SLN) and myoregulin (MRLN). The inhibition is blocked by VMP1. Enhanced by STRIT1/DWORF; STRIT1 increases activity by displacing sarcolipin (SLN), phospholamban (PLN) and myoregulin (MRLN). Stabilizes SERCA2 in its E2 state. This magnesium-dependent enzyme catalyzes the hydrolysis of ATP coupled with the translocation of calcium from the cytosol to the sarcoplasmic reticulum lumen. Involved in autophagy in response to starvation. Upon interaction with VMP1 and activation, controls ER-isolation membrane contacts for autophagosome formation. Also modulates ER contacts with lipid droplets, mitochondria and endosomes. In coordination with FLVCR2 mediates heme-stimulated switching from mitochondrial ATP synthesis to thermogenesis. Its function is as follows. Involved in the regulation of the contraction/relaxation cycle. Acts as a regulator of TNFSF11-mediated Ca(2+) signaling pathways via its interaction with TMEM64 which is critical for the TNFSF11-induced CREB1 activation and mitochondrial ROS generation necessary for proper osteoclast generation. Association between TMEM64 and SERCA2 in the ER leads to cytosolic Ca(2+) spiking for activation of NFATC1 and production of mitochondrial ROS, thereby triggering Ca(2+) signaling cascades that promote osteoclast differentiation and activation. This is Sarcoplasmic/endoplasmic reticulum calcium ATPase 2 (ATP2A2) from Oryctolagus cuniculus (Rabbit).